The following is a 311-amino-acid chain: Pyrimidine-specific ribonucleoside hydrolase RihA (311 aa).

H240 is a catalytic residue.

It belongs to the IUNH family. RihA subfamily.

In terms of biological role, hydrolyzes with equal efficiency cytidine or uridine to ribose and cytosine or uracil, respectively. The chain is Pyrimidine-specific ribonucleoside hydrolase RihA from Escherichia coli (strain ATCC 8739 / DSM 1576 / NBRC 3972 / NCIMB 8545 / WDCM 00012 / Crooks).